We begin with the raw amino-acid sequence, 498 residues long: Myotilin (498 aa).

Disordered regions lie at residues 1 to 46, 64 to 151, and 202 to 241; these read MFNY…QPRQ, MSSS…HEIQ, and QDDS…NDQD. An Omega-N-methylarginine modification is found at Arg20. Positions 29 to 43 are enriched in low complexity; the sequence is SSFSSQTKQSSIIIQ. Residues 77–138 show a composition bias toward polar residues; it reads AGSNPGQRVT…INAKPSQTAN (62 aa). A necessary for interaction with ACTN1 region spans residues 79–150; sequence SNPGQRVTTT…PIPRTPDHEI (72 aa). Positions 202–212 are enriched in low complexity; the sequence is QDDSGAQDSQQ. The tract at residues 215 to 493 is necessary for interaction with FLNC; that stretch reads SEHARLQVPT…QRLAAQSGLY (279 aa). Positions 215–498 are necessary for interaction with ACTA1; that stretch reads SEHARLQVPT…QSGLYESEEL (284 aa). Polar residues predominate over residues 222-235; that stretch reads VPTSQVRSRSTSRG. Ig-like C2-type domains lie at 250–335 and 349–441; these read PRFI…ATFT and PMFI…LDVT.

This sequence belongs to the myotilin/palladin family. As to quaternary structure, homodimer. Interacts with ACTA1, ACTN1, FLNA, FLNB, FLNC and MYOZ2. Interacts with the C-terminal region of MYOZ1. As to expression, expressed in skeletal muscle (at protein level). Expressed in skeletal muscle, heart, bone marrow and thyroid gland.

Its subcellular location is the cell membrane. It localises to the sarcolemma. The protein localises to the cytoplasm. It is found in the cytoskeleton. The protein resides in the myofibril. Its subcellular location is the sarcomere. It localises to the z line. Functionally, component of a complex of multiple actin cross-linking proteins. Involved in the control of myofibril assembly and stability at the Z lines in muscle cells. The chain is Myotilin (MYOT) from Homo sapiens (Human).